A 361-amino-acid chain; its full sequence is MASAARSASRAFLRSSLRPAVRSSRFALPTQGLRVASRRGYSSEASSGKSSNTLLWAGVALAGGAGAYFYLQGGDVGASTKVFTPTKEDYQKVYNAIAERLANETDYDDGSYGPVLVRLAWHASGTYDAETGTGGSNGATMRFAPESDHGANAGLKYARDFLEPIKAKFPWITYSDLWTLAGACAIQELGGPDIPWRPGRQDKDVSGCTPDGRLPDATKNQDHIRAIFGRMGFDDREMVALIGAHALGRAHTDRSGFDGPWNFSPTVFTNEFFRLLVEEKWQPRKWNGPKQFTDNTTKTLMMFPTDLALVQDKGFRKHVERYAKDSDAFFKEFSEVFVKLLELGVPFNSKVEDRYVFKRSE.

A mitochondrion-targeting transit peptide spans 1-41 (MASAARSASRAFLRSSLRPAVRSSRFALPTQGLRVASRRGY). The Proton acceptor role is filled by His122. Heme b is bound at residue His245. The active-site Tryptophan radical intermediate is the Trp261.

The protein belongs to the peroxidase family. Cytochrome c peroxidase subfamily. In terms of assembly, forms a one-to-one complex with cytochrome c. The cofactor is heme b.

It is found in the mitochondrion matrix. The protein resides in the mitochondrion intermembrane space. The enzyme catalyses 2 Fe(II)-[cytochrome c] + H2O2 + 2 H(+) = 2 Fe(III)-[cytochrome c] + 2 H2O. In terms of biological role, destroys radicals which are normally produced within the cells and which are toxic to biological systems. The protein is Cytochrome c peroxidase, mitochondrial (ccp1) of Emericella nidulans (strain FGSC A4 / ATCC 38163 / CBS 112.46 / NRRL 194 / M139) (Aspergillus nidulans).